Here is a 380-residue protein sequence, read N- to C-terminus: Cytochrome b (380 aa).

The next 4 helical transmembrane spans lie at Phe-34–Met-54, Trp-78–Ile-99, Trp-114–Leu-134, and Phe-179–Thr-199. Heme b-binding residues include His-84 and His-98. His-183 and His-197 together coordinate heme b. His-202 serves as a coordination point for a ubiquinone. 4 helical membrane passes run Leu-227–Ser-247, Leu-289–His-309, Ile-321–Ser-341, and Phe-348–Pro-368.

It belongs to the cytochrome b family. The cytochrome bc1 complex contains 11 subunits: 3 respiratory subunits (MT-CYB, CYC1 and UQCRFS1), 2 core proteins (UQCRC1 and UQCRC2) and 6 low-molecular weight proteins (UQCRH/QCR6, UQCRB/QCR7, UQCRQ/QCR8, UQCR10/QCR9, UQCR11/QCR10 and a cleavage product of UQCRFS1). This cytochrome bc1 complex then forms a dimer. The cofactor is heme b.

The protein localises to the mitochondrion inner membrane. Functionally, component of the ubiquinol-cytochrome c reductase complex (complex III or cytochrome b-c1 complex) that is part of the mitochondrial respiratory chain. The b-c1 complex mediates electron transfer from ubiquinol to cytochrome c. Contributes to the generation of a proton gradient across the mitochondrial membrane that is then used for ATP synthesis. The polypeptide is Cytochrome b (MT-CYB) (Pelecanoides georgicus (South Georgia diving petrel)).